A 178-amino-acid chain; its full sequence is ATP synthase subunit delta (178 aa).

Belongs to the ATPase delta chain family. In terms of assembly, F-type ATPases have 2 components, F(1) - the catalytic core - and F(0) - the membrane proton channel. F(1) has five subunits: alpha(3), beta(3), gamma(1), delta(1), epsilon(1). F(0) has three main subunits: a(1), b(2) and c(10-14). The alpha and beta chains form an alternating ring which encloses part of the gamma chain. F(1) is attached to F(0) by a central stalk formed by the gamma and epsilon chains, while a peripheral stalk is formed by the delta and b chains.

The protein localises to the cell inner membrane. Its function is as follows. F(1)F(0) ATP synthase produces ATP from ADP in the presence of a proton or sodium gradient. F-type ATPases consist of two structural domains, F(1) containing the extramembraneous catalytic core and F(0) containing the membrane proton channel, linked together by a central stalk and a peripheral stalk. During catalysis, ATP synthesis in the catalytic domain of F(1) is coupled via a rotary mechanism of the central stalk subunits to proton translocation. In terms of biological role, this protein is part of the stalk that links CF(0) to CF(1). It either transmits conformational changes from CF(0) to CF(1) or is implicated in proton conduction. The sequence is that of ATP synthase subunit delta from Polynucleobacter necessarius subsp. necessarius (strain STIR1).